A 495-amino-acid polypeptide reads, in one-letter code: Siroheme synthase 2 (495 aa).

A precorrin-2 dehydrogenase /sirohydrochlorin ferrochelatase region spans residues 1-205; it reads MDHYPIFLNL…GREREAEQAM (205 aa). NAD(+) is bound by residues 22 to 23 and 43 to 44; these read ET and PD. Serine 130 carries the post-translational modification Phosphoserine. A uroporphyrinogen-III C-methyltransferase region spans residues 220 to 495; that stretch reads GEVYLVGAGP…HPAPADTEQA (276 aa). Proline 229 is a binding site for S-adenosyl-L-methionine. Residue aspartate 252 is the Proton acceptor of the active site. The active-site Proton donor is the lysine 274. Residues 305 to 307, isoleucine 310, 335 to 336, methionine 387, and alanine 416 contribute to the S-adenosyl-L-methionine site; these read GGD and TA. A disordered region spans residues 471–495; the sequence is FPEHGCLRGEPRPTRHPAPADTEQA.

In the N-terminal section; belongs to the precorrin-2 dehydrogenase / sirohydrochlorin ferrochelatase family. This sequence in the C-terminal section; belongs to the precorrin methyltransferase family.

It catalyses the reaction uroporphyrinogen III + 2 S-adenosyl-L-methionine = precorrin-2 + 2 S-adenosyl-L-homocysteine + H(+). The catalysed reaction is precorrin-2 + NAD(+) = sirohydrochlorin + NADH + 2 H(+). The enzyme catalyses siroheme + 2 H(+) = sirohydrochlorin + Fe(2+). It functions in the pathway cofactor biosynthesis; adenosylcobalamin biosynthesis; precorrin-2 from uroporphyrinogen III: step 1/1. The protein operates within cofactor biosynthesis; adenosylcobalamin biosynthesis; sirohydrochlorin from precorrin-2: step 1/1. It participates in porphyrin-containing compound metabolism; siroheme biosynthesis; precorrin-2 from uroporphyrinogen III: step 1/1. Its pathway is porphyrin-containing compound metabolism; siroheme biosynthesis; siroheme from sirohydrochlorin: step 1/1. It functions in the pathway porphyrin-containing compound metabolism; siroheme biosynthesis; sirohydrochlorin from precorrin-2: step 1/1. In terms of biological role, multifunctional enzyme that catalyzes the SAM-dependent methylations of uroporphyrinogen III at position C-2 and C-7 to form precorrin-2 via precorrin-1. Then it catalyzes the NAD-dependent ring dehydrogenation of precorrin-2 to yield sirohydrochlorin. Finally, it catalyzes the ferrochelation of sirohydrochlorin to yield siroheme. This Halorhodospira halophila (strain DSM 244 / SL1) (Ectothiorhodospira halophila (strain DSM 244 / SL1)) protein is Siroheme synthase 2.